A 301-amino-acid polypeptide reads, in one-letter code: Acetylglutamate kinase (301 aa).

Residues 72 to 73 (GG), R94, and N199 each bind substrate.

This sequence belongs to the acetylglutamate kinase family. ArgB subfamily.

It localises to the cytoplasm. It carries out the reaction N-acetyl-L-glutamate + ATP = N-acetyl-L-glutamyl 5-phosphate + ADP. The protein operates within amino-acid biosynthesis; L-arginine biosynthesis; N(2)-acetyl-L-ornithine from L-glutamate: step 2/4. In terms of biological role, catalyzes the ATP-dependent phosphorylation of N-acetyl-L-glutamate. The chain is Acetylglutamate kinase from Bartonella henselae (strain ATCC 49882 / DSM 28221 / CCUG 30454 / Houston 1) (Rochalimaea henselae).